The chain runs to 294 residues: MKFAKGHGTENDFVLLCDTPAELRLTAAGVAALCDRRRGLGADGVLRVTTAGAAAAAGVLDRLPDGVAGDDWYMDYRNSDGSVAQMCGNGVRVFAHYLRASGLETRDEFVVGSLAGPRPVTVHAADATGADVSVDMGKANTLGSGGKAFEATVGGRRFAGLAVDVGNPHLACLDPELSVDELAALDVAAPVSFDAAQFPDGVNVEVLTAPAAGVVHMRVHERGVGETRSCGTGTVAAAVAALTAAGADTGTLTVRVPGGDVVVTVTDATSYLRGPSVLVAHGEISEEWWQQAQR.

Substrate-binding residues include asparagine 11 and asparagine 78. Cysteine 87 serves as the catalytic Proton donor. Substrate is bound by residues 88–89, asparagine 167, asparagine 203, and 221–222; these read GN and ER. The Proton acceptor role is filled by cysteine 230. Position 231–232 (231–232) interacts with substrate; the sequence is GT.

Belongs to the diaminopimelate epimerase family. In terms of assembly, homodimer.

It localises to the cytoplasm. It catalyses the reaction (2S,6S)-2,6-diaminopimelate = meso-2,6-diaminopimelate. It functions in the pathway amino-acid biosynthesis; L-lysine biosynthesis via DAP pathway; DL-2,6-diaminopimelate from LL-2,6-diaminopimelate: step 1/1. Its function is as follows. Catalyzes the stereoinversion of LL-2,6-diaminopimelate (L,L-DAP) to meso-diaminopimelate (meso-DAP), a precursor of L-lysine and an essential component of the bacterial peptidoglycan. The chain is Diaminopimelate epimerase from Mycobacterium avium (strain 104).